The following is a 196-amino-acid chain: Imidazoleglycerol-phosphate dehydratase (196 aa).

Belongs to the imidazoleglycerol-phosphate dehydratase family.

It is found in the cytoplasm. The enzyme catalyses D-erythro-1-(imidazol-4-yl)glycerol 3-phosphate = 3-(imidazol-4-yl)-2-oxopropyl phosphate + H2O. The protein operates within amino-acid biosynthesis; L-histidine biosynthesis; L-histidine from 5-phospho-alpha-D-ribose 1-diphosphate: step 6/9. In Akkermansia muciniphila (strain ATCC BAA-835 / DSM 22959 / JCM 33894 / BCRC 81048 / CCUG 64013 / CIP 107961 / Muc), this protein is Imidazoleglycerol-phosphate dehydratase.